The primary structure comprises 260 residues: MTILSEIVDYKEQLLKDGYYHDKLQNLKGVKHKNKSRLTDALIKNDNLTLIAEIKSKSPSVKAFQQTNIIKQVSDYERYGANAISVLTDERYFGGSFERLQQISETTQLPVLCKDFIIDPLQIDVAQKAGASIILLIVNILTDEKLRQLYQYASSKGLEVLVEVHDGIELQRAYQLNPQIIGVNNRDLKSFNTDVKHTNQILKCKKENYLYISESGIHSQQEVKQIVKSGIDGLLVGGALMNCNELEHFIPSLKLKKVKQ.

It belongs to the TrpC family.

The catalysed reaction is 1-(2-carboxyphenylamino)-1-deoxy-D-ribulose 5-phosphate + H(+) = (1S,2R)-1-C-(indol-3-yl)glycerol 3-phosphate + CO2 + H2O. It functions in the pathway amino-acid biosynthesis; L-tryptophan biosynthesis; L-tryptophan from chorismate: step 4/5. The polypeptide is Indole-3-glycerol phosphate synthase (Staphylococcus haemolyticus (strain JCSC1435)).